The following is a 397-amino-acid chain: Probable sugar efflux transporter (397 aa).

A run of 12 helical transmembrane segments spans residues 15–35, 51–71, 80–100, 103–123, 137–157, 169–189, 209–229, 246–266, 277–297, 299–319, 333–353, and 365–385; these read VIVM…PVAL, GLMI…CMLM, LLIS…FAWN, VLLI…SITA, QALG…LPLG, TFTL…RLLP, PMLI…FTAY, KATA…VLFS, LLSS…VSGI, GAIF…SLAM, VATA…ALIG, and IGYV…LMFL.

The protein belongs to the major facilitator superfamily. SotB (TC 2.A.1.2) family.

It is found in the cell inner membrane. Involved in the efflux of sugars. The physiological role may be the reduction of the intracellular concentration of toxic sugars or sugar metabolites. This chain is Probable sugar efflux transporter, found in Mannheimia succiniciproducens (strain KCTC 0769BP / MBEL55E).